Reading from the N-terminus, the 93-residue chain is Alpha-defensin 6/12 (93 aa).

The signal sequence occupies residues 1-19 (MKTLILLSALVLLAFQVQA). The propeptide occupies 20–60 (DPIQNTDEETKTEEQPGEEDQAVSVSFGDPEGTSLQEESLR). The disordered stretch occupies residues 23–54 (QNTDEETKTEEQPGEEDQAVSVSFGDPEGTSL). Cystine bridges form between Cys-64–Cys-92, Cys-66–Cys-81, and Cys-71–Cys-91.

Belongs to the alpha-defensin family. Paneth cells of the small bowel.

The protein localises to the secreted. Its function is as follows. Has broad-spectrum antimicrobial properties. Has antibacterial activity against the Gram-positive bacterium L.monocytogenes EGD and the Gram-negative bacteria E.coli ML-35p and avirulent S.typhimurium 7953, but not against the mouse-virulent S.typhimurium 14028S. Probably contributes to the antimicrobial barrier function of the small bowel mucosa. This is Alpha-defensin 6/12 (Defa6) from Mus musculus (Mouse).